The chain runs to 206 residues: Large ribosomal subunit protein uL4 (206 aa).

The tract at residues 44 to 77 is disordered; that stretch reads RQGTRAQKDRQTVKHSTKKPWRQKGTGRARAGMT. Residues 56 to 70 are compositionally biased toward basic residues; it reads VKHSTKKPWRQKGTG.

This sequence belongs to the universal ribosomal protein uL4 family. Part of the 50S ribosomal subunit.

In terms of biological role, one of the primary rRNA binding proteins, this protein initially binds near the 5'-end of the 23S rRNA. It is important during the early stages of 50S assembly. It makes multiple contacts with different domains of the 23S rRNA in the assembled 50S subunit and ribosome. Its function is as follows. Forms part of the polypeptide exit tunnel. This is Large ribosomal subunit protein uL4 from Methylibium petroleiphilum (strain ATCC BAA-1232 / LMG 22953 / PM1).